The primary structure comprises 252 residues: 5-oxoprolinase subunit A 1 (252 aa).

It belongs to the LamB/PxpA family. As to quaternary structure, forms a complex composed of PxpA, PxpB and PxpC.

It carries out the reaction 5-oxo-L-proline + ATP + 2 H2O = L-glutamate + ADP + phosphate + H(+). Functionally, catalyzes the cleavage of 5-oxoproline to form L-glutamate coupled to the hydrolysis of ATP to ADP and inorganic phosphate. The polypeptide is 5-oxoprolinase subunit A 1 (Pseudomonas putida (strain ATCC 47054 / DSM 6125 / CFBP 8728 / NCIMB 11950 / KT2440)).